Reading from the N-terminus, the 76-residue chain is Putative snRNP Sm-like protein (76 aa).

Residues 4 to 76 (RPLDVIHKSL…VLAISPTEEG (73 aa)) enclose the Sm domain.

The protein belongs to the snRNP Sm proteins family.

The sequence is that of Putative snRNP Sm-like protein from Pyrococcus furiosus (strain ATCC 43587 / DSM 3638 / JCM 8422 / Vc1).